The sequence spans 415 residues: Packaging protein 3 (415 aa).

2 disordered regions span residues 1–56 (MHPV…RRRA) and 66–85 (EGLA…VQLK). The segment at 1 to 173 (MHPVLRQMRP…VNQEINFQKS (173 aa)) is interaction with packaging protein 1. Residues 31–46 (PTASGGATSAADAAAD) are compositionally biased toward low complexity. Position 75 is a phosphoserine; by host (Ser75). Residues 76 to 85 (PERHPRVQLK) are compositionally biased toward basic and acidic residues. Phosphoserine; by host is present on Ser360. Low complexity predominate over residues 381 to 394 (GAGPGLAVAPARAG). Residues 381–415 (GAGPGLAVAPARAGNVGGVEEYDEDDEYEPEDGEY) form a disordered region. Over residues 400–415 (EEYDEDDEYEPEDGEY) the composition is skewed to acidic residues.

This sequence belongs to the adenoviridae packaging protein 3 family. In terms of assembly, part of the genome packaging complex composed of packaging proteins 1, 2 and 3; this complex specifically binds to the packaging sequence on the left end of viral genomic DNA and performs packaging of the viral genome. Interacts with hexon-linking protein IIIa; this interaction is required to promote correct genome packaging. In terms of processing, cleaved at different sites by the viral protease during virion maturation.

It localises to the host nucleus. Functionally, involved in viral genome packaging through its interaction with packaging proteins 1 and 2. After proteolytic cleavage by adenovirus protease, L1 52/55k protein is removed from the capsid during viral maturation. The polypeptide is Packaging protein 3 (Human adenovirus C serotype 2 (HAdV-2)).